The primary structure comprises 600 residues: Na(+)/dicarboxylate cotransporter 3 (600 aa).

The Cytoplasmic segment spans residues 1-16; that stretch reads MAALAALAKKVWSARR. The chain crosses the membrane as a helical span at residues 17–37; that stretch reads LLVLLLVPLALLPILFALPPK. The Extracellular segment spans residues 38–55; sequence EGRCLYVILLMAVYWCTE. A helical transmembrane segment spans residues 56 to 76; sequence ALPLSVTALLPIILFPFMGIL. The Cytoplasmic portion of the chain corresponds to 77–82; that stretch reads PSSKVC. Residues 83–103 form a helical membrane-spanning segment; that stretch reads PQYFLDTNFLFLSGLIMASAI. Over 104-137 the chain is Extracellular; it reads EEWNLHRRIALKVLMLVGVQPARLILGMMVTTSF. Residues 138–158 traverse the membrane as a helical segment; sequence LSMWLSNTASTAMMLPIASAI. Residues 159–229 are Cytoplasmic-facing; it reads LKSLFGQREA…KEEEHRRNIW (71 aa). A helical transmembrane segment spans residues 230-250; it reads KGFLISIPYSASIGGTATLTG. The Extracellular portion of the chain corresponds to 251–278; the sequence is TAPNLILLGQLKSFFPQCDVVNFGSWFI. A helical membrane pass occupies residues 279 to 299; the sequence is FAFPLMLLFLLVGWLWISFLY. Residues 300-336 lie on the Cytoplasmic side of the membrane; that stretch reads GGMSWRSWRKKKSKIRADAEDQAKAVIQEEFQNLGPI. A helical transmembrane segment spans residues 337–357; sequence KFAEQAVFILFCTFAILLFSR. The Extracellular portion of the chain corresponds to 358–372; the sequence is DPKFIPGWASLFAPG. Residues 373-393 traverse the membrane as a helical segment; it reads FVSDAVTGVAIVTILFFFPSQ. Residues 394-422 lie on the Cytoplasmic side of the membrane; sequence KPSLKWWFDFKAPNSETEPLLSWKKAQET. The segment at residues 423–443 is an intramembrane region (helical); it reads VPWNIILLLGGGFAMAKGCEE. Residues 444 to 461 lie on the Cytoplasmic side of the membrane; that stretch reads SGLSAWIGGQLHPLEHVP. Residues 462–482 form a helical membrane-spanning segment; sequence PLLAVLLITVVIAFFTEFASN. The Extracellular portion of the chain corresponds to 483 to 505; that stretch reads TATIIIFLPVLAELAIRLHVHPL. Residues 506–526 traverse the membrane as a helical segment; that stretch reads YLMIPGTVGCSYAFMLPVSTP. The Cytoplasmic segment spans residues 527–546; sequence PNSIAFSTGHLLVKDMVRTG. A helical transmembrane segment spans residues 547–567; sequence LLMNLMGVLLLSLAMNTWAQT. The Extracellular portion of the chain corresponds to 568–600; that stretch reads IFQLGTFPDWANTHAANATALPPALTNNTVQTF. N-linked (GlcNAc...) asparagine glycosylation is found at Asn-584 and Asn-594.

This sequence belongs to the SLC13A/DASS transporter (TC 2.A.47) family. NADC subfamily. In terms of tissue distribution, highly expressed in kidney, and at much lower levels in brain.

It localises to the cell membrane. It carries out the reaction succinate(out) + 3 Na(+)(out) = succinate(in) + 3 Na(+)(in). The catalysed reaction is 2-oxoglutarate(out) + 3 Na(+)(out) = 2-oxoglutarate(in) + 3 Na(+)(in). It catalyses the reaction N-acetyl-L-aspartate(out) + 3 Na(+)(out) = N-acetyl-L-aspartate(in) + 3 Na(+)(in). The enzyme catalyses fumarate(out) + 3 Na(+)(out) = fumarate(in) + 3 Na(+)(in). It carries out the reaction glutarate(out) + 3 Na(+)(out) = glutarate(in) + 3 Na(+)(in). The catalysed reaction is 2,2-dimethylsuccinate(out) + 3 Na(+)(out) = 2,2-dimethylsuccinate(in) + 3 Na(+)(in). It catalyses the reaction 2,3-dimethylsuccinate(out) + 3 Na(+)(out) = 2,3-dimethylsuccinate(in) + 3 Na(+)(in). The enzyme catalyses malate(out) + 3 Na(+)(out) = malate(in) + 3 Na(+)(in). It carries out the reaction itaconate(out) + 3 Na(+)(out) = itaconate(in) + 3 Na(+)(in). Functionally, high-affinity sodium-dicarboxylate cotransporter that accepts a range of substrates with 4-6 carbon atoms, such as the citric acid cycle intermediates succinate and alpha-ketoglutarate (2-oxoglutarate), as well as other compounds including N-acetyl-L-aspartate. Transports the dicarboxylate into the cell with a probable stoichiometry of 3 Na(+) for 1 divalent dicarboxylate, rendering the process electrogenic. Can transport citrate in a Na(+)-dependent manner, recognizing the divalent form of citrate rather than the trivalent form which is normally found in blood. Imports itaconate in hepatocytes leading to activation of TFEB-dependent lysosomal biogenesis involved in antibacterial innate immune response. The polypeptide is Na(+)/dicarboxylate cotransporter 3 (Slc13a3) (Mus musculus (Mouse)).